Consider the following 346-residue polypeptide: Glycerol-1-phosphate dehydrogenase [NAD(P)+] (346 aa).

NAD(+) is bound by residues 93–97 (GTIID) and 115–118 (TTAS). Asp120 contacts substrate. NAD(+) is bound at residue Ser124. Asp167 is a substrate binding site. Asp167 and His247 together coordinate Zn(2+). Position 251 (His251) interacts with substrate. Position 263 (His263) interacts with Zn(2+).

This sequence belongs to the glycerol-1-phosphate dehydrogenase family. The cofactor is Zn(2+).

The protein localises to the cytoplasm. It catalyses the reaction sn-glycerol 1-phosphate + NAD(+) = dihydroxyacetone phosphate + NADH + H(+). It carries out the reaction sn-glycerol 1-phosphate + NADP(+) = dihydroxyacetone phosphate + NADPH + H(+). Its pathway is membrane lipid metabolism; glycerophospholipid metabolism. Functionally, catalyzes the NAD(P)H-dependent reduction of dihydroxyacetonephosphate (DHAP or glycerone phosphate) to glycerol 1-phosphate (G1P). The G1P thus generated is used as the glycerophosphate backbone of phospholipids in the cellular membranes of Archaea. In Pyrococcus furiosus (strain ATCC 43587 / DSM 3638 / JCM 8422 / Vc1), this protein is Glycerol-1-phosphate dehydrogenase [NAD(P)+].